We begin with the raw amino-acid sequence, 377 residues long: Carbamoyl phosphate synthase small chain (377 aa).

A CPSase region spans residues 1-186 (MNTPALLVLA…LGKGFVTPDK (186 aa)). The L-glutamine site is built by S47, G238, and G240. A Glutamine amidotransferase type-1 domain is found at 190–377 (HVVAYDFGVK…IGNMKAAKQA (188 aa)). The active-site Nucleophile is C266. The L-glutamine site is built by L267, Q270, N308, G310, and F311. Active-site residues include H350 and E352.

Belongs to the CarA family. Composed of two chains; the small (or glutamine) chain promotes the hydrolysis of glutamine to ammonia, which is used by the large (or ammonia) chain to synthesize carbamoyl phosphate. Tetramer of heterodimers (alpha,beta)4.

The enzyme catalyses hydrogencarbonate + L-glutamine + 2 ATP + H2O = carbamoyl phosphate + L-glutamate + 2 ADP + phosphate + 2 H(+). It carries out the reaction L-glutamine + H2O = L-glutamate + NH4(+). The protein operates within amino-acid biosynthesis; L-arginine biosynthesis; carbamoyl phosphate from bicarbonate: step 1/1. Its pathway is pyrimidine metabolism; UMP biosynthesis via de novo pathway; (S)-dihydroorotate from bicarbonate: step 1/3. Functionally, small subunit of the glutamine-dependent carbamoyl phosphate synthetase (CPSase). CPSase catalyzes the formation of carbamoyl phosphate from the ammonia moiety of glutamine, carbonate, and phosphate donated by ATP, constituting the first step of 2 biosynthetic pathways, one leading to arginine and/or urea and the other to pyrimidine nucleotides. The small subunit (glutamine amidotransferase) binds and cleaves glutamine to supply the large subunit with the substrate ammonia. This is Carbamoyl phosphate synthase small chain from Neisseria gonorrhoeae.